The chain runs to 376 residues: Palmitoyltransferase PFA4 (376 aa).

Residues 1–11 lie on the Cytoplasmic side of the membrane; it reads MPVKLKWPWLG. Residues 12–32 traverse the membrane as a helical segment; it reads IAIPSFLIASIGYCAHYFILL. The Lumenal portion of the chain corresponds to 33 to 40; sequence NFLSLRKQ. A helical transmembrane segment spans residues 41–61; sequence LWYQFCQTMIWLSYYLAIYTP. The Cytoplasmic segment spans residues 62 to 122; sequence PGKPPTNFKP…NCVGYNNFPH (61 aa). One can recognise a DHHC domain in the interval 78–128; the sequence is VYCKKCKCYKPERSHHCKTCNQCVLMMDHHCPWTMNCVGYNNFPHFIRFLF. Cysteine 108 functions as the S-palmitoyl cysteine intermediate in the catalytic mechanism. Residues 123 to 143 form a helical membrane-spanning segment; the sequence is FIRFLFWVIVGTTSLAIFLTT. At 144-163 the chain is on the lumenal side; it reads RIHSIWVHRSSPSYLYYKSE. A helical transmembrane segment spans residues 164-184; it reads LIFLTILTPLNAFILLTISIL. The Cytoplasmic portion of the chain corresponds to 185 to 376; the sequence is MIRCLFNQIF…EDFGVDVDVE (192 aa).

Belongs to the DHHC palmitoyltransferase family. PFA4 subfamily.

The protein localises to the endoplasmic reticulum membrane. It carries out the reaction L-cysteinyl-[protein] + hexadecanoyl-CoA = S-hexadecanoyl-L-cysteinyl-[protein] + CoA. In terms of biological role, mediates the reversible addition of palmitate to target proteins, thereby regulating their membrane association and biological function. This chain is Palmitoyltransferase PFA4, found in Candida glabrata (strain ATCC 2001 / BCRC 20586 / JCM 3761 / NBRC 0622 / NRRL Y-65 / CBS 138) (Yeast).